Reading from the N-terminus, the 923-residue chain is Smoothelin (923 aa).

At Ala2 the chain carries N-acetylalanine. The stretch at 24–89 forms a coiled coil; it reads LAERRRIRSA…ARLAGRLESM (66 aa). Residues 134-456 are disordered; sequence SRLPSSGPRE…GTGEPGGSMK (323 aa). Low complexity-rich tracts occupy residues 164–179 and 192–205; these read QEQQ…TPED and RAPP…PASP. The span at 237 to 252 shows a compositional bias: pro residues; sequence LPHPSEAPSPEPPMSP. 2 stretches are compositionally biased toward polar residues: residues 272-285 and 293-314; these read PSDT…FSNT and TKSC…NREP. A phosphoserine mark is found at Ser299, Ser301, Ser304, and Ser340. A phosphothreonine mark is found at Thr359 and Thr372. A compositionally biased stretch (low complexity) spans 366–389; that stretch reads PSLISTTPASSSSSNSSSPSPSDT. A phosphoserine mark is found at Ser501, Ser521, and Ser574. Disordered stretches follow at residues 542–578 and 615–772; these read KMEP…PLSA and QRKR…ARKA. Residues 601–628 adopt a coiled-coil conformation; the sequence is EERKLIRAALRELRQRKRDQRDKERERR. The span at 615-638 shows a compositional bias: basic and acidic residues; it reads QRKRDQRDKERERRLREARARPGE. Ser641 carries the post-translational modification Phosphoserine. Residues 674-687 are compositionally biased toward polar residues; sequence NDGTQTARTTTVES. A compositionally biased stretch (low complexity) spans 697-721; it reads SSSSSTTTTTVQTKSFSSSSSSSSS. A Phosphoserine modification is found at Ser735. The segment covering 744 to 756 has biased composition (basic and acidic residues); the sequence is LERRQAEKKKELM. Position 798 is a phosphoserine (Ser798). The 108-residue stretch at 805–912 folds into the Calponin-homology (CH) domain; the sequence is NSIKQMLLDW…YVQSLYNHLR (108 aa).

This sequence belongs to the smoothelin family.

Its subcellular location is the cytoplasm. The protein resides in the cytoskeleton. In terms of biological role, structural protein of the cytoskeleton. The chain is Smoothelin (Smtn) from Mus musculus (Mouse).